The sequence spans 332 residues: Ferredoxin--NADP reductase 1 (332 aa).

FAD is bound by residues D35, K43, F48, V88, F123, D284, and T325.

This sequence belongs to the ferredoxin--NADP reductase type 2 family. In terms of assembly, homodimer. The cofactor is FAD.

The catalysed reaction is 2 reduced [2Fe-2S]-[ferredoxin] + NADP(+) + H(+) = 2 oxidized [2Fe-2S]-[ferredoxin] + NADPH. The protein is Ferredoxin--NADP reductase 1 of Listeria monocytogenes serotype 4b (strain F2365).